A 348-amino-acid chain; its full sequence is Arginine kinase Oct f 2 (348 aa).

Positions 1-83 (MAEELFKTLQ…LDAVIMDYHK (83 aa)) constitute a Phosphagen kinase N-terminal domain. 56–60 (GVGIY) lines the substrate pocket. The region spanning 111-347 (MIVSTRVRVG…NEIIREETNS (237 aa)) is the Phosphagen kinase C-terminal domain. ATP is bound by residues 114 to 118 (STRVR) and histidine 177. Glutamate 217 is a substrate binding site. Residue arginine 221 coordinates ATP. Cysteine 263 lines the substrate pocket. ATP contacts are provided by residues 272–276 (RASVH) and 300–305 (RGIHGE). Residue glutamate 305 coordinates substrate.

This sequence belongs to the ATP:guanido phosphotransferase family. As to expression, muscle (at protein level).

The catalysed reaction is L-arginine + ATP = N(omega)-phospho-L-arginine + ADP + H(+). In terms of biological role, catalyzes the reversible transfer of high energy ATP gamma-phosphate group to L-arginine. In Amphioctopus fangsiao (Ocellated octopus), this protein is Arginine kinase Oct f 2.